Here is an 84-residue protein sequence, read N- to C-terminus: Large ribosomal subunit protein bL31B (84 aa).

It belongs to the bacterial ribosomal protein bL31 family. Type B subfamily. Part of the 50S ribosomal subunit.

The polypeptide is Large ribosomal subunit protein bL31B (Rhodococcus erythropolis (strain PR4 / NBRC 100887)).